A 115-amino-acid chain; its full sequence is Ribonuclease P protein component 4 (115 aa).

Positions 66, 69, 96, and 99 each coordinate Zn(2+).

It belongs to the eukaryotic/archaeal RNase P protein component 4 family. In terms of assembly, consists of a catalytic RNA component and at least 4-5 protein subunits. The cofactor is Zn(2+).

The protein localises to the cytoplasm. It carries out the reaction Endonucleolytic cleavage of RNA, removing 5'-extranucleotides from tRNA precursor.. In terms of biological role, part of ribonuclease P, a protein complex that generates mature tRNA molecules by cleaving their 5'-ends. This chain is Ribonuclease P protein component 4, found in Hyperthermus butylicus (strain DSM 5456 / JCM 9403 / PLM1-5).